The following is a 378-amino-acid chain: Tafazzin (378 aa).

At 1-137 the chain is on the mitochondrial intermembrane side; that stretch reads MFMVVCSNLR…RLRNPSKFWY (137 aa). Residues 46 to 112 are disordered; sequence APEARPVPDE…DQDADPSLDV (67 aa). Residues 51–67 show a composition bias toward basic and acidic residues; the sequence is PVPDERYPGSQQDRKDI. An intramembrane segment occupies 138 to 158; sequence VVSQFVVSAVGIFSKVVLMFL. Residues 159–378 lie on the Mitochondrial intermembrane side of the membrane; that stretch reads NKPRVYNRER…ETEKLHRERN (220 aa). Residues 188-193 carry the HXXXXD motif motif; it reads HYSCFD.

The protein belongs to the taffazin family. Associates with multiple protein complexes. Association with large protein complexes occurs only in the presence of cardiolipin.

The protein resides in the mitochondrion outer membrane. Its subcellular location is the mitochondrion inner membrane. The protein localises to the mitochondrion. It is found in the mitochondrion membrane. It localises to the golgi apparatus membrane. The protein resides in the endoplasmic reticulum membrane. The catalysed reaction is 1'-[1,2-diacyl-sn-glycero-3-phospho],3'-[1-acyl-sn-glycero-3-phospho]-glycerol + a 1,2-diacyl-sn-glycero-3-phosphocholine = a cardiolipin + a 1-acyl-sn-glycero-3-phosphocholine. The enzyme catalyses 1'-[1,2-di-(9Z,12Z-octadecadienoyl)-sn-glycero-3-phospho]-3'-[1-(9Z,12Z-octadecadienoyl)-sn-glycero-3-phospho]-glycerol + 1-hexadecanoyl-2-(9Z,12Z-octadecadienoyl)-sn-glycero-3-phosphocholine = 1',3'-bis-[1,2-di-(9Z,12Z-octadecadienoyl)-sn-glycero-3-phospho]-glycerol + 1-hexadecanoyl-sn-glycero-3-phosphocholine. It carries out the reaction 1'-[1,2-di-(9Z,12Z-octadecadienoyl)-sn-glycero-3-phospho]-3'-[2-(9Z,12Z-octadecadienoyl)-sn-glycero-3-phospho]-glycerol + 1-hexadecanoyl-2-(9Z,12Z-octadecadienoyl)-sn-glycero-3-phosphocholine = 1',3'-bis-[1,2-di-(9Z,12Z-octadecadienoyl)-sn-glycero-3-phospho]-glycerol + 1-hexadecanoyl-sn-glycero-3-phosphocholine. It catalyses the reaction 1,2-di-(9Z,12Z-octadecadienoyl)-sn-glycero-3-phosphocholine + 1'-[1,2-di-(9Z,12Z-octadecadienoyl)-sn-glycero-3-phospho]-3'-[1-(9Z,12Z-octadecadienoyl)-sn-glycero-3-phospho]-glycerol = 1-(9Z,12Z)-octadecadienoyl-sn-glycero-3-phosphocholine + 1',3'-bis-[1,2-di-(9Z,12Z-octadecadienoyl)-sn-glycero-3-phospho]-glycerol. The catalysed reaction is 1-tetradecanoyl-sn-glycero-3-phosphocholine + 1',3'-bis-[1,2-di-(9Z,12Z-octadecadienoyl)-sn-glycero-3-phospho]-glycerol = 1-tetradecanoyl-2-(9Z,12Z-octadecadienoyl)-sn-glycero-3-phosphocholine + 1'-[1,2-di-(9Z,12Z-octadecadienoyl)-sn-glycero-3-phospho]-3'-[1-(9Z,12Z-octadecadienoyl)-sn-glycero-3-phospho]-glycerol. The enzyme catalyses 1',3'-bis[1,2-di-(9Z-octadecenoyl)-sn-glycero-3-phospho]-glycerol + 1-nonadecanoyl-sn-glycero-3-phosphocholine = 1-nonadecanoyl-2-(9Z-octadecenoyl)-sn-glycero-3-phosphocholine + 1'-[1,2-di-(9Z-octadecenoyl)-sn-glycero-3-phospho]-3'-[1-(9Z-octadecenoyl)-sn-glycero-3-phospho]-glycerol. It carries out the reaction a 1,2-diacyl-sn-glycero-3-phospho-(1'-sn-glycerol) + a 1-acyl-sn-glycero-3-phosphocholine = 1-acyl-sn-glycero-3-phospho-(1'-sn-glycerol) + a 1,2-diacyl-sn-glycero-3-phosphocholine. It catalyses the reaction 1-hexadecanoyl-2-(9Z,12Z-octadecadienoyl)-sn-glycero-3-phospho-(1'-sn-glycerol) + 1-hexadecanoyl-sn-glycero-3-phosphocholine = 1-hexadecanoyl-sn-glycero-3-phospho-(1'-sn-glycerol) + 1-hexadecanoyl-2-(9Z,12Z-octadecadienoyl)-sn-glycero-3-phosphocholine. The catalysed reaction is 1,2-di-(9Z-octadecenoyl)-sn-glycero-3-phospho-(1'-sn-glycerol) + 1-nonadecanoyl-sn-glycero-3-phosphocholine = 1-nonadecanoyl-2-(9Z-octadecenoyl)-sn-glycero-3-phosphocholine + 1-(9Z-octadecenoyl)-sn-glycero-3-phospho-(1'-sn-glycerol). The enzyme catalyses a 1,2-diacyl-sn-glycero-3-phosphate + a 1-acyl-sn-glycero-3-phosphocholine = a 1-acyl-sn-glycero-3-phosphate + a 1,2-diacyl-sn-glycero-3-phosphocholine. It carries out the reaction 1-hexadecanoyl-2-(9Z,12Z-octadecadienoyl)-sn-glycero-3-phosphate + 1-hexadecanoyl-sn-glycero-3-phosphocholine = 1-hexadecanoyl-2-(9Z,12Z-octadecadienoyl)-sn-glycero-3-phosphocholine + 1-hexadecanoyl-sn-glycero-3-phosphate. It catalyses the reaction 1-hexadecanoyl-2-(9Z,12Z-octadecadienoyl)-sn-glycero-3-phosphocholine + 1-(9Z-octadecenoyl)-sn-glycero-3-phosphate = 1-(9Z)-octadecenoyl-2-(9Z,12Z)-octadecadienoyl-sn-glycero-3-phosphate + 1-hexadecanoyl-sn-glycero-3-phosphocholine. The catalysed reaction is a 1-acyl-sn-glycero-3-phosphocholine + a 1,2-diacyl-sn-glycero-3-phosphoethanolamine = a 1-acyl-sn-glycero-3-phosphoethanolamine + a 1,2-diacyl-sn-glycero-3-phosphocholine. The enzyme catalyses 1-hexadecanoyl-2-(9Z,12Z-octadecadienoyl)-sn-glycero-3-phosphoethanolamine + 1-hexadecanoyl-sn-glycero-3-phosphocholine = 1-hexadecanoyl-2-(9Z,12Z-octadecadienoyl)-sn-glycero-3-phosphocholine + 1-hexadecanoyl-sn-glycero-3-phosphoethanolamine. It carries out the reaction 1,2-di-(9Z,12Z-octadecadienoyl)-sn-glycero-3-phosphoethanolamine + 1-tetradecanoyl-sn-glycero-3-phosphocholine = 1-(9Z,12Z-octadecadienoyl)-sn-glycero-3-phosphoethanolamine + 1-tetradecanoyl-2-(9Z,12Z-octadecadienoyl)-sn-glycero-3-phosphocholine. It catalyses the reaction 1'-[1,2-diacyl-sn-glycero-3-phospho],3'-[1-acyl-sn-glycero-3-phospho]-glycerol + a 1,2-diacyl-sn-glycero-3-phosphoethanolamine = a cardiolipin + a 1-acyl-sn-glycero-3-phosphoethanolamine. The catalysed reaction is 1-hexadecanoyl-2-(9Z,12Z-octadecadienoyl)-sn-glycero-3-phosphoethanolamine + 1'-[1,2-di-(9Z,12Z-octadecadienoyl)-sn-glycero-3-phospho]-3'-[1-(9Z,12Z-octadecadienoyl)-sn-glycero-3-phospho]-glycerol = 1',3'-bis-[1,2-di-(9Z,12Z-octadecadienoyl)-sn-glycero-3-phospho]-glycerol + 1-hexadecanoyl-sn-glycero-3-phosphoethanolamine. The enzyme catalyses 1'-[1-(9Z,12Z-octadecadienoyl)-2-(9Z-octadecenoyl)-sn-glycero-3-phospho]-3'-[1-(9Z,12Z-octadecadienoyl)-sn-glycero-3-phospho]-glycerol + 1',3'-bis-[1,2-di-(9Z,12Z-octadecadienoyl)-sn-glycero-3-phospho]-glycerol = 1'-[1,2-di-(9Z,12Z-octadecadienoyl)-sn-glycero-3-phospho]-3'-[1-(9Z,12Z-octadecadienoyl)-2-(9Z-octadecenoyl)-sn-glycero-3-phospho]-glycerol + 1'-[1,2-di-(9Z,12Z-octadecadienoyl)-sn-glycero-3-phospho]-3'-[1-(9Z,12Z-octadecadienoyl)-sn-glycero-3-phospho]-glycerol. It carries out the reaction 1,2-di-(9Z-hexadecenoyl)-sn-glycero-3-phosphocholine + 1-hexadecanoyl-sn-glycero-3-phosphocholine = 1-hexadecanoyl-2-(9Z-hexadecenoyl)-sn-glycero-3-phosphocholine + 1-(9Z-hexadecenoyl)-sn-glycero-3-phosphocholine. It catalyses the reaction 1,2-dioctadecanoyl-sn-glycero-3-phosphocholine + 1-hexadecanoyl-sn-glycero-3-phosphocholine = 1-hexadecanoyl-2-octadecanoyl-sn-glycero-3-phosphocholine + 1-octadecanoyl-sn-glycero-3-phosphocholine. The catalysed reaction is 1,2-di-(9Z-octadecenoyl)-sn-glycero-3-phosphocholine + 1-hexadecanoyl-sn-glycero-3-phosphocholine = 1-hexadecanoyl-2-(9Z-octadecenoyl)-sn-glycero-3-phosphocholine + 1-(9Z-octadecenoyl)-sn-glycero-3-phosphocholine. The enzyme catalyses 1,2-di-(9Z,12Z-octadecadienoyl)-sn-glycero-3-phosphocholine + 1-(9Z-octadecenoyl)-sn-glycero-3-phosphocholine = 1-(9Z)-octadecenoyl-2-(9Z,12Z)-octadecadienoyl-sn-glycero-3-phosphocholine + 1-(9Z,12Z)-octadecadienoyl-sn-glycero-3-phosphocholine. It carries out the reaction 1,2-di-(9Z,12Z,15Z-octadecatrienoyl)-sn-glycero-3-phosphocholine + 1-tetradecanoyl-sn-glycero-3-phosphocholine = 1-tetradecanoyl-2-(9Z,12Z,15Z-octadecatrienoyl)-sn-glycero-3-phosphocholine + 1-(9Z,12Z,15Z-octadecatrienoyl)-sn-glycero-3-phosphocholine. It catalyses the reaction 1-nonadecanoyl-sn-glycero-3-phosphocholine + 1-octadecanoyl-2-(9Z-octadecenoyl)-sn-glycero-3-phosphocholine = 1-nonadecanoyl-2-(9Z-octadecenoyl)-sn-glycero-3-phosphocholine + 1-octadecanoyl-sn-glycero-3-phosphocholine. The catalysed reaction is 1-(9Z)-octadecenoyl-2-octadecanoyl-sn-glycero-3-phosphocholine + 1-nonadecanoyl-sn-glycero-3-phosphocholine = 2-octadecanoyl-sn-glycero-3-phosphocholine + 1-nonadecanoyl-2-(9Z-octadecenoyl)-sn-glycero-3-phosphocholine. It participates in phospholipid metabolism. Acyltransferase required to remodel newly synthesized phospholipid cardiolipin (1',3'-bis-[1,2-diacyl-sn-glycero-3-phospho]-glycerol or CL), a key component of the mitochondrial inner membrane, with tissue specific acyl chains necessary for adequate mitochondrial function. Its role in cellular physiology is to improve mitochondrial performance. CL is critical for the coassembly of lipids and proteins in mitochondrial membranes. For instance, remodeling of the acyl groups of CL in the mitochondrial inner membrane affects the assembly and stability of respiratory chain complex IV and its supercomplex forms. Catalyzes the transacylation between phospholipids and lysophospholipids, with the highest rate being between phosphatidylcholine (1,2-diacyl-sn-glycero-3-phosphocholine or PC) and CL. Catalyzes both 1-acyl-sn-glycero-3-phosphocholine (lysophosphatidylcholine or LPC) reacylation and PC-CL transacylation, that means, it exchanges acyl groups between CL and PC by a combination of forward and reverse transacylations. Also catalyzes transacylations between other phospholipids such as phosphatidylethanolamine (1,2-diacyl-sn-glycero-3-phosphoethanolamine or PE) and CL, between PC and PE, and between PC and phosphatidate (1,2-diacyl-sn-glycero-3-phosphate or PA), although at lower rate. Not regiospecific, it transfers acyl groups into any of the sn-1 and sn-2 positions of the monolysocardiolipin (MLCL), which is an important prerequisite for uniformity and symmetry in CL acyl distribution. Cannot transacylate dilysocardiolipin (DLCL), thus, the role of MLCL is limited to that of an acyl acceptor. CoA-independent, it can reshuffle molecular species within a single phospholipid class. Redistributes fatty acids between MLCL, CL, and other lipids, which prolongs the half-life of CL. Its action is completely reversible, which allows for cyclic changes, such as fission and fusion or bending and flattening of the membrane. Hence, by contributing to the flexibility of the lipid composition, it plays an important role in the dynamics of mitochondria membranes. Essential for the final stage of spermatogenesis, spermatid individualization. Required for the initiation of mitophagy. The chain is Tafazzin from Drosophila melanogaster (Fruit fly).